We begin with the raw amino-acid sequence, 1090 residues long: Nitrogen assimilation transcription factor nit-4 (1090 aa).

The segment covering 1 to 14 (MNSSDVQMMSSQDA) has biased composition (polar residues). The disordered stretch occupies residues 1 to 43 (MNSSDVQMMSSQDAPGSAGLAPDNIASSLPSKKKSRRGADPTN). Residues 53–81 (CIACRRRKSKCDGALPSCAACASVYGTEC) constitute a DNA-binding region (zn(2)-C6 fungal-type). 6 disordered regions span residues 145-176 (RRDE…SQAV), 666-689 (FSTS…PAPP), 773-798 (HQHH…YQQQ), 825-875 (GIPT…VKPP), 936-999 (QGWD…QRQQ), and 1033-1053 (HGAE…TTVG). The segment covering 167–176 (GRDDATSQAV) has biased composition (basic and acidic residues). Residues 666–677 (FSTSEVPSPNRT) show a composition bias toward polar residues. Residues 849 to 859 (QPQQQQQPQAQ) are compositionally biased toward low complexity. 2 stretches are compositionally biased toward gly residues: residues 940-965 (LEGG…GGAG) and 976-988 (NIGG…GGST). Over residues 990–999 (QRQQQQQRQQ) the composition is skewed to low complexity.

It localises to the nucleus. Functionally, pathway-specific regulatory gene of nitrate assimilation; it activates the transcription of the genes for nitrate and nitrite reductases. The polypeptide is Nitrogen assimilation transcription factor nit-4 (nit-4) (Neurospora crassa (strain ATCC 24698 / 74-OR23-1A / CBS 708.71 / DSM 1257 / FGSC 987)).